A 472-amino-acid chain; its full sequence is tRNA modification GTPase MnmE (472 aa).

Residues Arg28, Glu91, and Lys130 each coordinate (6S)-5-formyl-5,6,7,8-tetrahydrofolate. Residues Gly225 to Ala391 form the TrmE-type G domain. Residue Asn235 coordinates K(+). GTP-binding positions include Asn235–Ser240, Ser254–Thr260, and Asp279–Gly282. Residue Ser239 coordinates Mg(2+). Residues Ser254, Ile256, and Thr259 each contribute to the K(+) site. Mg(2+) is bound at residue Thr260. Lys472 is a (6S)-5-formyl-5,6,7,8-tetrahydrofolate binding site.

Belongs to the TRAFAC class TrmE-Era-EngA-EngB-Septin-like GTPase superfamily. TrmE GTPase family. Homodimer. Heterotetramer of two MnmE and two MnmG subunits. K(+) serves as cofactor.

It is found in the cytoplasm. Functionally, exhibits a very high intrinsic GTPase hydrolysis rate. Involved in the addition of a carboxymethylaminomethyl (cmnm) group at the wobble position (U34) of certain tRNAs, forming tRNA-cmnm(5)s(2)U34. This is tRNA modification GTPase MnmE from Treponema denticola (strain ATCC 35405 / DSM 14222 / CIP 103919 / JCM 8153 / KCTC 15104).